Here is a 1088-residue protein sequence, read N- to C-terminus: Insulin receptor substrate 1-B (1088 aa).

In terms of domain architecture, PH spans 15 to 117 (DVRKVGYLRK…WYQALVDLHN (103 aa)). Y48 carries the phosphotyrosine modification. The region spanning 155-259 (FKEVWQVIMK…EAMKALSDEF (105 aa)) is the IRS-type PTB domain. Residues 259–428 (FRPRSKSQSS…GGFISSDEYG (170 aa)) form a disordered region. Composition is skewed to low complexity over residues 264–278 (KSQS…ISVP), 302–312 (SATATSPAGGA), 379–400 (SPSA…GSTS), and 408–420 (SSAS…SDGG). S307 carries the phosphoserine modification. A Phosphotyrosine; by INSR modification is found at Y460. The short motif at 460 to 463 (YICM) is the YXXM motif 1 element. 2 stretches are compositionally biased toward polar residues: residues 466-479 (SSSH…QRYQ) and 499-516 (SSGT…PSQS). Disordered stretches follow at residues 466–485 (SSSH…RGEE) and 496–516 (RTHS…PSQS). 5 short sequence motifs (YXXM motif) span residues 521-524 (YTEM), 567-570 (YMPM), 584-587 (YMPM), 612-615 (YMMM), and 654-657 (YINM). 2 positions are modified to phosphotyrosine; by INSR: Y567 and Y584. Y612 is modified (phosphotyrosine). The disordered stretch occupies residues 704 to 785 (NLRISANSGH…PPEPKSPGEY (82 aa)). A compositionally biased stretch (polar residues) spans 707-718 (ISANSGHNLYTE). Residues 719-729 (DSSSSSTSSDS) are compositionally biased toward low complexity. Phosphotyrosine; by INSR is present on residues Y785 and Y823. Residues 785 to 787 (YVN) are GRB2-binding. The YXXM motif 7 signature appears at 823–826 (YMNM). The span at 840 to 863 (TSSYEPPNKPVNSVCPTETCSSSR) shows a compositional bias: polar residues. The segment at 840–868 (TSSYEPPNKPVNSVCPTETCSSSRPPIRG) is disordered. Y875 is modified (phosphotyrosine; by INSR). Short sequence motifs (YXXM motif) lie at residues 875–878 (YMSM) and 909–912 (YAEM). The interval 935 to 1006 (ASRSSLLGQG…SGEDVKRHSS (72 aa)) is disordered. 2 stretches are compositionally biased toward polar residues: residues 946–961 (GPSA…NRNP) and 980–995 (ETFS…TTGP). A phosphotyrosine; by INSR mark is found at Y1037 and Y1069.

Interacts with the NPXY motif of tyrosine-phosphorylated igf1r and insr via the PTB domain. Binds to phosphatidylinositol 3-kinase p85 subunit at a low level in vitro prior to phosphorylation. Binding is greatly enhanced following tyrosine phosphorylation by insr and probably occurs via the phosphorylated YXXM motifs. Phosphorylation of Tyr-785 is required for grb2-binding.

Functionally, may mediate the control of various cellular processes by insulin. When phosphorylated by the insulin receptor binds specifically to various cellular proteins containing SH2 domains such as phosphatidylinositol 3-kinase p85 subunit or grb2. Activates phosphatidylinositol 3-kinase when bound to the regulatory p85 subunit. This Xenopus laevis (African clawed frog) protein is Insulin receptor substrate 1-B (irs1-b).